Reading from the N-terminus, the 612-residue chain is UvrABC system protein C (612 aa).

The GIY-YIG domain maps to 21-99 (HQPGVYRMYD…IKKYRPRYNV (79 aa)). A UVR domain is found at 208-243 (QQVIDELMNKMEQASTDLDFERAARFRDQIAALRKT).

The protein belongs to the UvrC family. As to quaternary structure, interacts with UvrB in an incision complex.

It localises to the cytoplasm. Functionally, the UvrABC repair system catalyzes the recognition and processing of DNA lesions. UvrC both incises the 5' and 3' sides of the lesion. The N-terminal half is responsible for the 3' incision and the C-terminal half is responsible for the 5' incision. This chain is UvrABC system protein C, found in Idiomarina loihiensis (strain ATCC BAA-735 / DSM 15497 / L2-TR).